The primary structure comprises 284 residues: Pantothenate synthetase (284 aa).

30 to 37 contacts ATP; that stretch reads MGNLHDGH. The active-site Proton donor is the His-37. (R)-pantoate is bound at residue Gln-61. Gln-61 lines the beta-alanine pocket. 149–152 lines the ATP pocket; sequence GEKD. Residue Gln-155 participates in (R)-pantoate binding. ATP contacts are provided by residues Val-178 and 186 to 189; that span reads LSSR.

The protein belongs to the pantothenate synthetase family. Homodimer.

It localises to the cytoplasm. It catalyses the reaction (R)-pantoate + beta-alanine + ATP = (R)-pantothenate + AMP + diphosphate + H(+). The protein operates within cofactor biosynthesis; (R)-pantothenate biosynthesis; (R)-pantothenate from (R)-pantoate and beta-alanine: step 1/1. In terms of biological role, catalyzes the condensation of pantoate with beta-alanine in an ATP-dependent reaction via a pantoyl-adenylate intermediate. This Enterobacter sp. (strain 638) protein is Pantothenate synthetase.